Reading from the N-terminus, the 105-residue chain is Endogenous retrovirus group K member 104 Rec protein (105 aa).

Residues 1–43 (MNPSEMQRKAPPRRRRHCNRAPLTHKMNKMVTSEEEMKLPSTK) are disordered. A compositionally biased stretch (basic residues) spans 10 to 19 (APPRRRRHCN). Positions 13–20 (RRRRHCNR) match the Nuclear localization signal motif. Residues 50 to 59 (WAQLKKLTQL) carry the Nuclear export signal motif.

In terms of assembly, forms homodimers, homotrimers, and homotetramers via a C-terminal domain. Associates with XPO1 and with ZNF145.

The protein localises to the cytoplasm. It is found in the nucleus. Its subcellular location is the nucleolus. Its function is as follows. Retroviral replication requires the nuclear export and translation of unspliced, singly-spliced and multiply-spliced derivatives of the initial genomic transcript. Rec interacts with a highly structured RNA element (RcRE) present in the viral 3'LTR and recruits the cellular nuclear export machinery. This permits export to the cytoplasm of unspliced genomic or incompletely spliced subgenomic viral transcripts. The protein is Endogenous retrovirus group K member 104 Rec protein (HERV-K104) of Homo sapiens (Human).